The following is a 635-amino-acid chain: MVSIRLPDGSVRQYEHPVTVAEVAASIGPGLAKAALGGKIDGELVDTSALIDHDVALAIVTEKDADGLDIIRHSTAHLLAYAVKDLYPEAQVTIGPVIDNGFYYDFAYNRPFTPEDLEKIEKRMQELAKKDEPVSRRVVSRDEAVDYFKSIGEKYKAEIIESIPATDEIKLYSHGGFTDLCRGPHVPSTGKLKVFKLMKVAGAYWRGDSKNEQLQRIYGTAWTKKEDQEAYLHMLEEAEKRDHRKLGKQLDLFHMQDESPGMVFWHPRGWTLWQQVEQYMRRRVNDAGYLEIKTPMIMDRSLWEASGHWQNYRENMFTTESEKRDYAIKPMNCPGHVQVFNHGLRSYRDLPLRYAEFGSCHRNESSGALHGLMRVRGFVQDDAHIFCTEDQFISESIAFNTLAMSVYKDFGFDHVEIKLSLRPDARAGTDETWDRAEQGLREALTACGVTWEELPGEGAFYGPKVEYHIKDALGRSWQCGTLQLDMVLPERLGAEYVAEDNSRRRPIMLHRAIVGSMERFLGILIEHHAGAMPAWLAPMQVVVMNIAESQTEYAQSLAQSLQKQGVRVAADLRNEKISYKIREHTLEKVPYLLVVGDKEREAQTVAVRARGGVDLGVMPLDTFIERLRQDVQSFN.

Residues 1-61 form the TGS domain; it reads MVSIRLPDGS…DHDVALAIVT (61 aa). The segment at 242–533 is catalytic; that stretch reads DHRKLGKQLD…LIEHHAGAMP (292 aa). Residues C333, H384, and H510 each coordinate Zn(2+).

Belongs to the class-II aminoacyl-tRNA synthetase family. Homodimer. Requires Zn(2+) as cofactor.

It localises to the cytoplasm. It catalyses the reaction tRNA(Thr) + L-threonine + ATP = L-threonyl-tRNA(Thr) + AMP + diphosphate + H(+). Catalyzes the attachment of threonine to tRNA(Thr) in a two-step reaction: L-threonine is first activated by ATP to form Thr-AMP and then transferred to the acceptor end of tRNA(Thr). Also edits incorrectly charged L-seryl-tRNA(Thr). This Paraburkholderia xenovorans (strain LB400) protein is Threonine--tRNA ligase.